Consider the following 350-residue polypeptide: Solute carrier family 35 member E4 (350 aa).

8 helical membrane-spanning segments follow: residues 40–60 (VLGQ…LLAG), 79–99 (PLLL…WGAQ), 110–130 (VLLL…GLST), 135–155 (LAQL…ALLL), 218–238 (VTLL…AALV), 258–278 (VLLS…LLAL), 279–299 (TSAL…LILS), and 301–321 (LLFG…TLSG). The 55-residue stretch at 125 to 179 (NVGLSTVPLDLAQLATTTTPLFTLALSALLLGRRHHPLQFAAMGPLCLGAACSLA) folds into the EamA domain.

Belongs to the TPT transporter family. SLC35E subfamily.

The protein localises to the membrane. Functionally, putative transporter. This is Solute carrier family 35 member E4 (Slc35e4) from Rattus norvegicus (Rat).